The chain runs to 319 residues: MQLSSYHDVIKAAERLEGFANRTPVFTSRTLDAETGAQVFIKCENLQRTGSFKFRGAFNALSRFDEAQRKAGVVAFSSGNHAQGIALAARLLQMPATIVMPTDAPAAKVAATREYGATVVFYDRITEDREQIGRTLAEQHGMTLIPSYDHPDVLAGQGTAAKELLEFTGPLDALFVGLGGGGMLSGTALATRALSPDCLLYGVEPEAGNDGQRSFQTGSIVHIDTPATIADGAQTQHLGNHTFPIIRENVNDILTVSDAELVESMRFFMQRMKMVVEPTGCLGLAALRNLKQQFRGQRVGIIVTGGNVDIEKYASLLKG.

The residue at position 53 (lysine 53) is an N6-(pyridoxal phosphate)lysine. Pyridoxal 5'-phosphate contacts are provided by residues asparagine 80, 179–183 (GGGGM), and threonine 304.

This sequence belongs to the serine/threonine dehydratase family. In terms of assembly, may be either a monomer or a homodimer. Requires pyridoxal 5'-phosphate as cofactor. Mn(2+) is required as a cofactor. Mg(2+) serves as cofactor. The cofactor is Ca(2+).

It carries out the reaction (3S)-3-hydroxy-L-aspartate = oxaloacetate + NH4(+). With respect to regulation, is strongly inhibited by hydroxylamine and EDTA in vitro. Catalyzes the deamination of L-threo-3-hydroxyaspartate to oxaloacetate and ammonia. Shows a high specificity towards L-threo-3-hydroxyaspartate as other 3-hydroxyaminoacids, i.e. D,L-erythro- and D-threo-3-hydroxyaspartate, D-threonine, L-threonine, D,L-allothreonine, D,L-threo-3-phenylserine, D-serine, and L-serine, are not substrates for this enzyme. Exhibits no detectable serine and aspartate racemase activity. Might play a role in the detoxification of naturally occurring 3-hydroxyaspartate in Pseudomonas sp. T62 cells. The sequence is that of L-threo-3-hydroxyaspartate ammonia-lyase from Pseudomonas sp.